Here is a 346-residue protein sequence, read N- to C-terminus: Peroxidase 19 (346 aa).

The N-terminal stretch at 1-31 is a signal peptide; sequence MHVISLSLSSIFFFLFLTSTILISPVQPTTS. Cystine bridges form between cysteine 51/cysteine 134, cysteine 84/cysteine 89, cysteine 140/cysteine 342, and cysteine 219/cysteine 251. The Proton acceptor role is filled by histidine 82. Aspartate 83, valine 86, glycine 88, aspartate 90, and serine 92 together coordinate Ca(2+). Proline 182 is a substrate binding site. The N-linked (GlcNAc...) asparagine glycan is linked to asparagine 185. Residue histidine 212 participates in heme b binding. Threonine 213 serves as a coordination point for Ca(2+). Residues aspartate 265, threonine 268, and aspartate 273 each contribute to the Ca(2+) site.

The protein belongs to the peroxidase family. Classical plant (class III) peroxidase subfamily. Requires heme b as cofactor. Ca(2+) serves as cofactor.

It localises to the secreted. It catalyses the reaction 2 a phenolic donor + H2O2 = 2 a phenolic radical donor + 2 H2O. In terms of biological role, removal of H(2)O(2), oxidation of toxic reductants, biosynthesis and degradation of lignin, suberization, auxin catabolism, response to environmental stresses such as wounding, pathogen attack and oxidative stress. These functions might be dependent on each isozyme/isoform in each plant tissue. This chain is Peroxidase 19 (PER19), found in Arabidopsis thaliana (Mouse-ear cress).